The primary structure comprises 274 residues: Large ribosomal subunit protein uL2 (274 aa).

The interval 224 to 256 is disordered; the sequence is AMNPIDHPHGGGEGRTGEGRHAVDPWGNLTKGY. A compositionally biased stretch (basic and acidic residues) spans 229 to 246; sequence DHPHGGGEGRTGEGRHAV.

It belongs to the universal ribosomal protein uL2 family. Part of the 50S ribosomal subunit. Forms a bridge to the 30S subunit in the 70S ribosome.

Its function is as follows. One of the primary rRNA binding proteins. Required for association of the 30S and 50S subunits to form the 70S ribosome, for tRNA binding and peptide bond formation. It has been suggested to have peptidyltransferase activity; this is somewhat controversial. Makes several contacts with the 16S rRNA in the 70S ribosome. The protein is Large ribosomal subunit protein uL2 of Acidovorax sp. (strain JS42).